The following is a 309-amino-acid chain: Taste receptor type 2 member 66 (309 aa).

Residue Met-1 is a topological domain, extracellular. Residues 2–22 form a helical membrane-spanning segment; sequence ITFLPIIFSILIVVTFVIGNF. The Cytoplasmic portion of the chain corresponds to 23-46; the sequence is ANGFIALANSIEWFKRQKISFADQ. A helical membrane pass occupies residues 47–67; that stretch reads ILTALAVPRVGLLWVLLLNWY. Residues 68–86 lie on the Extracellular side of the membrane; it reads ATELNPAFYSIEVRITAYN. The helical transmembrane segment at 87 to 107 threads the bilayer; that stretch reads LWAVINHFSNWLATSLSIFYL. The Cytoplasmic segment spans residues 108–126; sequence LKIANFSNLIFLRLKRRVK. A helical transmembrane segment spans residues 127-147; sequence SVVLVILLGPLLFLVCHLFVI. Residues 148-178 lie on the Extracellular side of the membrane; it reads NMNQIIWTKEYEGNMTWKIKLRSAMYLSNTT. N-linked (GlcNAc...) asparagine glycans are attached at residues Asn-161 and Asn-176. A helical transmembrane segment spans residues 179–199; sequence VTILANLVPFTVTLISFLLLV. Topologically, residues 200–229 are cytoplasmic; sequence CSLCKHLKKMQLHGKGSQDPSTKVHIKALQ. A helical transmembrane segment spans residues 230–250; the sequence is TVISFLLLCAIYFVSVIISVW. Residues 251–259 lie on the Extracellular side of the membrane; that stretch reads SFKNLENKP. The chain crosses the membrane as a helical span at residues 260–280; that stretch reads VFMFCQAIGFSCSSAHPFILI. Topologically, residues 281–309 are cytoplasmic; sequence WGNKKLKQPFLSVLWQMRYWVKGEKPSSS.

This sequence belongs to the G-protein coupled receptor T2R family.

It localises to the membrane. Functionally, receptor that may play a role in the perception of bitterness and is gustducin-linked. May play a role in sensing the chemical composition of the gastrointestinal content. The activity of this receptor may stimulate alpha gustducin, mediate PLC-beta-2 activation and lead to the gating of TRPM5. This chain is Taste receptor type 2 member 66 (TAS2R66), found in Pan paniscus (Pygmy chimpanzee).